Here is a 229-residue protein sequence, read N- to C-terminus: Ribosome maturation factor RimM (229 aa).

The tract at residues 1–37 is disordered; that stretch reads MAGHDSGNAKRGRSPSFGVFVRKPVERTSAKGTSDGA. A PRC barrel domain is found at 148–229; it reads ADEFYWVDLI…RVVVDWEADY (82 aa).

This sequence belongs to the RimM family. Binds ribosomal protein uS19.

The protein localises to the cytoplasm. An accessory protein needed during the final step in the assembly of 30S ribosomal subunit, possibly for assembly of the head region. Essential for efficient processing of 16S rRNA. May be needed both before and after RbfA during the maturation of 16S rRNA. It has affinity for free ribosomal 30S subunits but not for 70S ribosomes. The polypeptide is Ribosome maturation factor RimM (Burkholderia pseudomallei (strain 668)).